Reading from the N-terminus, the 1119-residue chain is Isoleucine--tRNA ligase (1119 aa).

The interval 1–43 (MVPRRSRQRPASSCRTAKTARREMPYPLPAPDGQEPEAQPVTP) is disordered. The short motif at 84–94 (PFANGLPHYGH) is the 'HIGH' region element. The 'KMSKS' region signature appears at 676–680 (KVSKS). Lys-679 is an ATP binding site.

The protein belongs to the class-I aminoacyl-tRNA synthetase family. IleS type 2 subfamily. In terms of assembly, monomer. It depends on Zn(2+) as a cofactor.

The protein localises to the cytoplasm. It catalyses the reaction tRNA(Ile) + L-isoleucine + ATP = L-isoleucyl-tRNA(Ile) + AMP + diphosphate. Its function is as follows. Catalyzes the attachment of isoleucine to tRNA(Ile). As IleRS can inadvertently accommodate and process structurally similar amino acids such as valine, to avoid such errors it has two additional distinct tRNA(Ile)-dependent editing activities. One activity is designated as 'pretransfer' editing and involves the hydrolysis of activated Val-AMP. The other activity is designated 'posttransfer' editing and involves deacylation of mischarged Val-tRNA(Ile). The protein is Isoleucine--tRNA ligase of Leifsonia xyli subsp. xyli (strain CTCB07).